The chain runs to 140 residues: Transcription antitermination protein NusB (140 aa).

The protein belongs to the NusB family.

Its function is as follows. Involved in transcription antitermination. Required for transcription of ribosomal RNA (rRNA) genes. Binds specifically to the boxA antiterminator sequence of the ribosomal RNA (rrn) operons. The sequence is that of Transcription antitermination protein NusB from Pseudothermotoga lettingae (strain ATCC BAA-301 / DSM 14385 / NBRC 107922 / TMO) (Thermotoga lettingae).